The sequence spans 122 residues: UPF0102 protein Smed_3545 (122 aa).

This sequence belongs to the UPF0102 family.

The chain is UPF0102 protein Smed_3545 from Sinorhizobium medicae (strain WSM419) (Ensifer medicae).